The following is a 747-amino-acid chain: NAD(P)H-quinone oxidoreductase subunit 5, chloroplastic (747 aa).

Helical transmembrane passes span 9–29 (WIIPFTPLPVPILIGVGLLLF), 40–60 (WAFPSIFLLIIVMIFSVDLSI), 89–109 (IDSLTSIMSILITTVGILVLI), 125–145 (FAYLSFFNTSMLGLVTSSNLI), 147–167 (VYIFWELVGMCSYLLIGFWFT), 185–205 (GDFGLLLGILGLYWITGSLEF), 219–239 (NEVNIFFITLCALLLFCGSVA), 258–278 (TPISALIHAATMVAAGIFLVA), 280–300 (LLPFFIAIPSIMNGIAFIGII), 327–347 (LGYMMLALGMGSYRIALFHLI), 354–374 (ALLFLGSGSIIHSMEAIVGYS), 396–416 (TAFLIGTLSLCGIPPFACFWS), 425–445 (WLYSPIFAIIACSTAGLTAFY), 552–572 (LFSMLVLVLFTFFVGAIGISF), 606–626 (FFTNATFSVSIAFFGIFIASF), and 727–747 (YILFFVFFVLLFLIIFYSFFI).

Belongs to the complex I subunit 5 family. As to quaternary structure, NDH is composed of at least 16 different subunits, 5 of which are encoded in the nucleus.

The protein resides in the plastid. It is found in the chloroplast thylakoid membrane. It carries out the reaction a plastoquinone + NADH + (n+1) H(+)(in) = a plastoquinol + NAD(+) + n H(+)(out). The enzyme catalyses a plastoquinone + NADPH + (n+1) H(+)(in) = a plastoquinol + NADP(+) + n H(+)(out). NDH shuttles electrons from NAD(P)H:plastoquinone, via FMN and iron-sulfur (Fe-S) centers, to quinones in the photosynthetic chain and possibly in a chloroplast respiratory chain. The immediate electron acceptor for the enzyme in this species is believed to be plastoquinone. Couples the redox reaction to proton translocation, and thus conserves the redox energy in a proton gradient. The polypeptide is NAD(P)H-quinone oxidoreductase subunit 5, chloroplastic (ndhF) (Lotus japonicus (Lotus corniculatus var. japonicus)).